Here is a 398-residue protein sequence, read N- to C-terminus: Basic helix-loop-helix neural transcription factor TAP (398 aa).

Disordered regions lie at residues 35 to 59 (ETEA…IPQP) and 102 to 144 (RATN…RSRS). The segment covering 127 to 141 (RPKRKYAVGKNRVTR) has biased composition (basic residues). Residues 154-206 (FRRMKANDRERNRMHNLNDALEKLRVTLPSLPEETKLTKIEILRFAHNYIFAL) enclose the bHLH domain. Disordered stretches follow at residues 265–333 (AQHQ…QQFS) and 361–398 (QQSS…APQV). Over residues 307–333 (HQQQQQPHQPHHLQPNPQQESSPQQFS) the composition is skewed to low complexity. Polar residues predominate over residues 361–370 (QQSSFYSQTP).

Expressed in neuronal and glial precursors during differentiation. In the peripheral nervous system, expression is exclusively in one of the neurons that innervate each larval chemosensory organ. Expressed at a late stage in the development of one type of adult chemosensory organ, the gustatory bristles of the leg, wing and proboscis. Expressed very early in the development of a second type of chemosensory receptors, the olfactory organs of the antenna.

The protein localises to the nucleus. In terms of biological role, may play a role in the specification of the sugar-sensitive adult gustatory neuron and affect the response to sugar and salt. Regulated by POXN. This chain is Basic helix-loop-helix neural transcription factor TAP (tap), found in Drosophila melanogaster (Fruit fly).